A 645-amino-acid polypeptide reads, in one-letter code: UPF0313 protein CLB_0243 (645 aa).

The Radical SAM core domain occupies 295–566 (AIKEVKFSIT…RMQRALLQFS (272 aa)). 3 residues coordinate [4Fe-4S] cluster: Cys-309, Cys-313, and Cys-316. Residues 598–645 (NKPYKKSHKKNNAKNNNNHYNKNNNYNKNKDISKKNKKNSLSKHKKRK) form a disordered region. Residues 600–609 (PYKKSHKKNN) show a composition bias toward basic residues. Residues 610-624 (AKNNNNHYNKNNNYN) are compositionally biased toward low complexity. Over residues 632–645 (KNKKNSLSKHKKRK) the composition is skewed to basic residues.

The protein belongs to the UPF0313 family. [4Fe-4S] cluster is required as a cofactor.

This Clostridium botulinum (strain ATCC 19397 / Type A) protein is UPF0313 protein CLB_0243.